Consider the following 140-residue polypeptide: ATP synthase epsilon chain (140 aa).

Belongs to the ATPase epsilon chain family. In terms of assembly, F-type ATPases have 2 components, CF(1) - the catalytic core - and CF(0) - the membrane proton channel. CF(1) has five subunits: alpha(3), beta(3), gamma(1), delta(1), epsilon(1). CF(0) has three main subunits: a, b and c.

It localises to the cell inner membrane. Its function is as follows. Produces ATP from ADP in the presence of a proton gradient across the membrane. The protein is ATP synthase epsilon chain of Bordetella bronchiseptica (strain ATCC BAA-588 / NCTC 13252 / RB50) (Alcaligenes bronchisepticus).